Here is a 177-residue protein sequence, read N- to C-terminus: Large ribosomal subunit protein uL6 (177 aa).

The protein belongs to the universal ribosomal protein uL6 family. Part of the 50S ribosomal subunit.

In terms of biological role, this protein binds to the 23S rRNA, and is important in its secondary structure. It is located near the subunit interface in the base of the L7/L12 stalk, and near the tRNA binding site of the peptidyltransferase center. This Pseudomonas putida (strain ATCC 700007 / DSM 6899 / JCM 31910 / BCRC 17059 / LMG 24140 / F1) protein is Large ribosomal subunit protein uL6.